Consider the following 313-residue polypeptide: Ribosomal RNA small subunit methyltransferase H (313 aa).

S-adenosyl-L-methionine contacts are provided by residues 33 to 35, aspartate 53, phenylalanine 80, aspartate 101, and glutamine 108; that span reads GGH. The segment at 282–313 is disordered; that stretch reads LVHNKPLTPSEAEIEQNPRARSAKLRVAQKLA.

This sequence belongs to the methyltransferase superfamily. RsmH family.

It localises to the cytoplasm. The enzyme catalyses cytidine(1402) in 16S rRNA + S-adenosyl-L-methionine = N(4)-methylcytidine(1402) in 16S rRNA + S-adenosyl-L-homocysteine + H(+). In terms of biological role, specifically methylates the N4 position of cytidine in position 1402 (C1402) of 16S rRNA. This Magnetococcus marinus (strain ATCC BAA-1437 / JCM 17883 / MC-1) protein is Ribosomal RNA small subunit methyltransferase H.